Reading from the N-terminus, the 346-residue chain is MNTAPKQYGFYMPAEWYPHERCWMAWPCHHETWSKIGLDKAKMAYARVAKAIAQFEPVTLLVNPGDEDSATNLCKGHNIEIISLPINDSWTRDTGATFLINNEKQLAGVDWIHNAWGGNYADCSLDNLIASHLIKCTEAQYFHAPLVMEGGSFHVDGEGTILTSKECLLNSNRNPHLSQQEIEQYLINYLGAERIIWLNMGLIGDETDGHIDEIATFIAPGKVLCLITKDKEDPNYHRLQENFEILKSSKDARGRTFEVYTVEQPPATYLNGERLTLSYINFYMANQGIVMPAFGYESFDRLAYQLFVQIFPGYQITQIDALDVFSGGGGIHCITQQQPKSYKLGE.

Cys-333 (amidino-cysteine intermediate) is an active-site residue.

This sequence belongs to the agmatine deiminase family.

It carries out the reaction agmatine + H2O = N-carbamoylputrescine + NH4(+). This Legionella pneumophila (strain Paris) protein is Putative agmatine deiminase.